We begin with the raw amino-acid sequence, 339 residues long: Probable scoulerine-9-O-methyltransferase OMT3B (339 aa).

Methionine 161 is a binding site for S-adenosyl-L-methionine. Substrate is bound at residue aspartate 164. Residues threonine 165, glycine 191, aspartate 214, 228-229 (DV), and lysine 242 each bind S-adenosyl-L-methionine. 243 to 247 (SILHE) contacts substrate. Catalysis depends on histidine 246, which acts as the Proton acceptor.

Belongs to the class I-like SAM-binding methyltransferase superfamily. Cation-independent O-methyltransferase family. COMT subfamily.

It catalyses the reaction (S)-scoulerine + S-adenosyl-L-methionine = (S)-tetrahydrocolumbamine + S-adenosyl-L-homocysteine + H(+). The protein operates within alkaloid biosynthesis. Its function is as follows. Methyltransferase involved in the biosynthesis of the benzylisoquinoline alkaloid noscapine. Catalyzes the conversion of (S)-scoulerine to (S)-tetrahydrocolumbamine. The polypeptide is Probable scoulerine-9-O-methyltransferase OMT3B (Papaver somniferum (Opium poppy)).